We begin with the raw amino-acid sequence, 564 residues long: Kelch repeat and BTB domain-containing protein 1 (564 aa).

The BTB domain occupies 21–88 (CDINIVINDE…IYGIPLSLTN (68 aa)). The BACK domain maps to 123–219 (CIDFYIYADK…SLLSPQVIKS (97 aa)). Kelch repeat units follow at residues 252 to 297 (IELI…VLDN), 298 to 346 (IIYM…ADDE), 347 to 395 (YIYC…MLNG), 397 to 441 (IYVI…VHDG), 442 to 492 (KIYI…SAHN), and 494 to 539 (LYVG…CEPI).

Interacts (via BTB domain) with host CUL3.

It is found in the host cytoplasm. Its function is as follows. Probable substrate-specific adapter of CUL3-containing E3 ubiquitin-protein ligases which mediate the ubiquitination and subsequent proteasomal degradation of host target proteins. This Cowpox virus (strain GRI-90 / Grishak) (CPV) protein is Kelch repeat and BTB domain-containing protein 1 (KBTB1).